Reading from the N-terminus, the 152-residue chain is UPF0266 membrane protein YobD (152 aa).

3 helical membrane-spanning segments follow: residues 6 to 26, 45 to 65, and 67 to 87; these read LLLI…QFIM, VDSV…VTSH, and AQMT…IFWI.

The protein belongs to the UPF0266 family.

The protein localises to the cell inner membrane. The sequence is that of UPF0266 membrane protein YobD from Salmonella paratyphi C (strain RKS4594).